A 141-amino-acid chain; its full sequence is Putative pre-16S rRNA nuclease (141 aa).

The protein belongs to the YqgF nuclease family.

The protein resides in the cytoplasm. In terms of biological role, could be a nuclease involved in processing of the 5'-end of pre-16S rRNA. This is Putative pre-16S rRNA nuclease from Aliivibrio fischeri (strain ATCC 700601 / ES114) (Vibrio fischeri).